A 349-amino-acid chain; its full sequence is Isopentenyl-diphosphate delta-isomerase (349 aa).

6–7 (RK) provides a ligand contact to substrate. FMN-binding positions include 62–64 (AMT), S93, and N122. A substrate-binding site is contributed by Q152. E153 provides a ligand contact to Mg(2+). FMN is bound by residues K184, T214, 258 to 259 (GG), and 280 to 281 (AG).

This sequence belongs to the IPP isomerase type 2 family. As to quaternary structure, homooctamer. Dimer of tetramers. FMN serves as cofactor. It depends on NADPH as a cofactor. Mg(2+) is required as a cofactor.

The protein localises to the cytoplasm. The enzyme catalyses isopentenyl diphosphate = dimethylallyl diphosphate. In terms of biological role, involved in the biosynthesis of isoprenoids. Catalyzes the 1,3-allylic rearrangement of the homoallylic substrate isopentenyl (IPP) to its allylic isomer, dimethylallyl diphosphate (DMAPP). This Bacillus cereus (strain AH187) protein is Isopentenyl-diphosphate delta-isomerase.